Here is a 282-residue protein sequence, read N- to C-terminus: U1 small nuclear ribonucleoprotein A (282 aa).

Ala-2 is modified (N-acetylalanine). In terms of domain architecture, RRM 1 spans 10-89 (HTIYINNLNE…KPMRIQYAKT (80 aa)). Position 60 is an N6-acetyllysine (Lys-60). The interval 100–132 (TFVERDRKREKRKPKSQETPATKKAVQGGGATP) is disordered. Thr-131 carries the phosphothreonine modification. Residue Arg-152 is modified to Omega-N-methylarginine. Residues 208 to 282 (HILFLTNLPE…NAMKISFAKK (75 aa)) form the RRM 2 domain.

The protein belongs to the RRM U1 A/B'' family. U1 snRNP is composed of the 7 core Sm proteins SNRPB, SNRPD1, SNRPD2, SNRPD3, SNRPE, SNRPF and SNRPG that assemble in a heptameric protein ring on the Sm site of the small nuclear RNA to form the core snRNP, and at least three U1 snRNP-specific proteins SNRNP70/U1-70K, SNRPA/U1-A and SNRPC/U1-C. Interacts with SFPQ; component of a snRNP-free complex with SFPQ. Interacts with IVNS1ABP (via BACK domain); the interaction is indirect.

It localises to the nucleus. In terms of biological role, component of the spliceosomal U1 snRNP, which is essential for recognition of the pre-mRNA 5' splice-site and the subsequent assembly of the spliceosome. U1 snRNP is the first snRNP to interact with pre-mRNA. This interaction is required for the subsequent binding of U2 snRNP and the U4/U6/U5 tri-snRNP. SNRPA binds stem loop II of U1 snRNA. In a snRNP-free form (SF-A) may be involved in coupled pre-mRNA splicing and polyadenylation process. May bind preferentially to the 5'-UGCAC-3' motif on RNAs. The chain is U1 small nuclear ribonucleoprotein A (SNRPA) from Homo sapiens (Human).